Consider the following 608-residue polypeptide: Sensor protein kinase WalK (608 aa).

The next 2 helical transmembrane spans lie at leucine 14–threonine 34 and isoleucine 182–alanine 202. Positions arginine 203–alanine 255 constitute an HAMP domain. Positions glutamate 260–leucine 330 constitute a PAS domain. The region spanning glutamate 324–glutamate 377 is the PAC domain. Residues asparagine 381 to valine 599 form the Histidine kinase domain. Histidine 384 bears the Phosphohistidine; by autocatalysis mark.

Post-translationally, autophosphorylated.

Its subcellular location is the cell membrane. The enzyme catalyses ATP + protein L-histidine = ADP + protein N-phospho-L-histidine.. Its function is as follows. Member of the two-component regulatory system WalK/WalR. WalK functions as a sensor protein kinase which is autophosphorylated at a histidine residue and transfers its phosphate group to WalR. This chain is Sensor protein kinase WalK (walK), found in Staphylococcus haemolyticus (strain JCSC1435).